The following is a 327-amino-acid chain: Selenate reductase subunit beta (327 aa).

3 consecutive 4Fe-4S ferredoxin-type domains span residues 6-35, 124-155, and 157-186; these read LAYVFDLNKCIGCHTCTMACKQLWTNRDGR, NHYFYLPRICNHCSNPACLAACPTKAIYKREE, and GLVVVDQSRCKGYRYCVKACPYGKMYFNLQ. [4Fe-4S] cluster-binding residues include Cys15, Cys18, Cys21, Cys25, Cys133, Cys136, and Cys141. [3Fe-4S] cluster-binding residues include Cys145, Cys166, and Cys172. Positions 176, 193, 196, 208, and 212 each coordinate [4Fe-4S] cluster.

Heterotrimer of alpha (SerA), beta (SerB) and gamma (SerC) subunits. [3Fe-4S] cluster is required as a cofactor. [4Fe-4S] cluster serves as cofactor.

It is found in the periplasm. The catalysed reaction is selenite + 2 Fe(III)-[cytochrome c] + H2O = 2 Fe(II)-[cytochrome] + selenate + 2 H(+). Its activity is regulated as follows. Enzyme isolated from cells grown in a tungstate rich environment shows a 20-fold reduction in selenate reductase activity. Functionally, component of the selenate reductase, which catalyzes the reduction of selenate to selenite and allows anaerobic growth with selenate as the sole terminal electron acceptor. A c-type di-heme cytochrome of the cytc4 family was shown to donate electrons to the selenate reductase in vitro. SerABC can also use reduced benzyl viologen or reduced methyl viologen as an electron donor. This subunit transfers electrons from SerC to SerA. The reductase is specific for selenate, and cannot reduce nitrate, nitrite, chlorate or sulfate. The polypeptide is Selenate reductase subunit beta (Thauera selenatis).